The chain runs to 228 residues: Uracil-DNA glycosylase (228 aa).

Catalysis depends on Asp-64, which acts as the Proton acceptor.

The protein belongs to the uracil-DNA glycosylase (UDG) superfamily. UNG family.

The protein resides in the cytoplasm. The enzyme catalyses Hydrolyzes single-stranded DNA or mismatched double-stranded DNA and polynucleotides, releasing free uracil.. Its function is as follows. Excises uracil residues from the DNA which can arise as a result of misincorporation of dUMP residues by DNA polymerase or due to deamination of cytosine. The polypeptide is Uracil-DNA glycosylase (Yersinia pestis bv. Antiqua (strain Antiqua)).